A 346-amino-acid chain; its full sequence is High mobility group protein 20A (346 aa).

2 stretches are compositionally biased toward polar residues: residues 1–10 and 55–65; these read MESLMASSTL and SQGQLLQSEAS. 2 disordered regions span residues 1–112 and 178–210; these read MESL…YVRF and FSRK…TEVK. Over residues 71–81 the composition is skewed to basic and acidic residues; that stretch reads NEQRPEDEQRS. The span at 82-95 shows a compositional bias: basic residues; sequence KRGGWSKGRKRKKP. A DNA-binding region (HMG box) is located at residues 102–170; sequence PKSPLTGYVR…RYMKELEQYQ (69 aa). Position 104 is a phosphoserine (Ser-104). Over residues 181–210 the composition is skewed to basic and acidic residues; the sequence is KTQDRQKGKSHRQDAARQATHDHEKETEVK. A coiled-coil region spans residues 228–272; it reads SKAREAELRQLRKSNMEFEERNAALQKHVESMRTAVEKLEVDVIQ.

Interacts with DTNB. In terms of tissue distribution, expressed in brain. Detected in mature neurons.

The protein resides in the nucleus. Plays a role in neuronal differentiation as chromatin-associated protein. Acts as inhibitor of HMG20B. Overcomes the repressive effects of the neuronal silencer REST and induces the activation of neuronal-specific genes. Involved in the recruitment of the histone methyltransferase KMT2A/MLL1 and consequent increased methylation of histone H3 lysine 4. This is High mobility group protein 20A (Hmg20a) from Mus musculus (Mouse).